A 99-amino-acid polypeptide reads, in one-letter code: DNA-directed RNA polymerase subunit omega (99 aa).

This sequence belongs to the RNA polymerase subunit omega family. As to quaternary structure, the RNAP catalytic core consists of 2 alpha, 1 beta, 1 beta' and 1 omega subunit. When a sigma factor is associated with the core the holoenzyme is formed, which can initiate transcription.

The enzyme catalyses RNA(n) + a ribonucleoside 5'-triphosphate = RNA(n+1) + diphosphate. In terms of biological role, promotes RNA polymerase assembly. Latches the N- and C-terminal regions of the beta' subunit thereby facilitating its interaction with the beta and alpha subunits. In Deinococcus deserti (strain DSM 17065 / CIP 109153 / LMG 22923 / VCD115), this protein is DNA-directed RNA polymerase subunit omega.